Consider the following 185-residue polypeptide: Hypoxanthine/guanine phosphoribosyltransferase (185 aa).

It belongs to the purine/pyrimidine phosphoribosyltransferase family. Archaeal HPRT subfamily. In terms of assembly, homodimer.

It is found in the cytoplasm. The catalysed reaction is IMP + diphosphate = hypoxanthine + 5-phospho-alpha-D-ribose 1-diphosphate. The enzyme catalyses GMP + diphosphate = guanine + 5-phospho-alpha-D-ribose 1-diphosphate. Its pathway is purine metabolism; IMP biosynthesis via salvage pathway; IMP from hypoxanthine: step 1/1. In terms of biological role, catalyzes a salvage reaction resulting in the formation of IMP that is energically less costly than de novo synthesis. In Methanococcus vannielii (strain ATCC 35089 / DSM 1224 / JCM 13029 / OCM 148 / SB), this protein is Hypoxanthine/guanine phosphoribosyltransferase.